The following is a 305-amino-acid chain: Probable lipid kinase YegS-like (305 aa).

One can recognise a DAGKc domain in the interval 1 to 129 (MTQRRAMLIL…VDLGEVGGKL (129 aa)). ATP-binding positions include threonine 39, 65–71 (GDGTLRD), and threonine 92. Mg(2+) is bound by residues leucine 210, aspartate 213, and leucine 215. Residue glutamate 268 is the Proton acceptor of the active site.

This sequence belongs to the diacylglycerol/lipid kinase family. YegS lipid kinase subfamily. Requires Mg(2+) as cofactor. Ca(2+) serves as cofactor.

The protein resides in the cytoplasm. In terms of biological role, probably phosphorylates lipids; the in vivo substrate is unknown. The polypeptide is Probable lipid kinase YegS-like (Pseudomonas savastanoi pv. phaseolicola (strain 1448A / Race 6) (Pseudomonas syringae pv. phaseolicola (strain 1448A / Race 6))).